The sequence spans 335 residues: Anthranilate phosphoribosyltransferase (335 aa).

5-phospho-alpha-D-ribose 1-diphosphate contacts are provided by residues glycine 79, 82-83 (GD), threonine 87, 89-92 (NIST), 107-115 (KHGNRSASS), and alanine 119. Glycine 79 contacts anthranilate. A Mg(2+)-binding site is contributed by serine 91. Asparagine 110 serves as a coordination point for anthranilate. Arginine 165 provides a ligand contact to anthranilate. Aspartate 224 and glutamate 225 together coordinate Mg(2+).

Belongs to the anthranilate phosphoribosyltransferase family. In terms of assembly, homodimer. Requires Mg(2+) as cofactor.

The enzyme catalyses N-(5-phospho-beta-D-ribosyl)anthranilate + diphosphate = 5-phospho-alpha-D-ribose 1-diphosphate + anthranilate. The protein operates within amino-acid biosynthesis; L-tryptophan biosynthesis; L-tryptophan from chorismate: step 2/5. Its function is as follows. Catalyzes the transfer of the phosphoribosyl group of 5-phosphorylribose-1-pyrophosphate (PRPP) to anthranilate to yield N-(5'-phosphoribosyl)-anthranilate (PRA). In Methanobrevibacter smithii (strain ATCC 35061 / DSM 861 / OCM 144 / PS), this protein is Anthranilate phosphoribosyltransferase.